Reading from the N-terminus, the 62-residue chain is Large ribosomal subunit protein uL29 (62 aa).

The protein belongs to the universal ribosomal protein uL29 family.

The protein is Large ribosomal subunit protein uL29 of Acholeplasma laidlawii (strain PG-8A).